The primary structure comprises 164 residues: Transcriptional regulator MraZ (164 aa).

SpoVT-AbrB domains lie at 7–60 (HYTN…EIDG) and 83–126 (SEIL…EPGR). Residues 144–164 (QLSARHAAPDAPPLRSHGARE) are disordered.

Belongs to the MraZ family. Forms oligomers.

The protein localises to the cytoplasm. Its subcellular location is the nucleoid. In Methylocella silvestris (strain DSM 15510 / CIP 108128 / LMG 27833 / NCIMB 13906 / BL2), this protein is Transcriptional regulator MraZ.